Consider the following 174-residue polypeptide: Adenylate kinase (174 aa).

Residues 12 to 41 form an NMP region; sequence STGDMLRAAIKAGTPLGLEAKKIIDEGGLV. AMP-binding positions include threonine 13, arginine 18, 39–41, 67–70, and glutamine 74; these read GLV and GFPR. Positions 104–141 are LID; that stretch reads GRRVHLASGRTYHVTYNPPKVEGKDDVTGEDLIQRDDD. ATP contacts are provided by residues arginine 105 and 114 to 115; that span reads TY. AMP contacts are provided by arginine 138 and arginine 149.

Belongs to the adenylate kinase family. In terms of assembly, monomer.

It is found in the cytoplasm. It carries out the reaction AMP + ATP = 2 ADP. Its pathway is purine metabolism; AMP biosynthesis via salvage pathway; AMP from ADP: step 1/1. Catalyzes the reversible transfer of the terminal phosphate group between ATP and AMP. Plays an important role in cellular energy homeostasis and in adenine nucleotide metabolism. The polypeptide is Adenylate kinase (Neisseria flavescens).